A 266-amino-acid polypeptide reads, in one-letter code: Indole-3-glycerol phosphate synthase (266 aa).

It belongs to the TrpC family.

It carries out the reaction 1-(2-carboxyphenylamino)-1-deoxy-D-ribulose 5-phosphate + H(+) = (1S,2R)-1-C-(indol-3-yl)glycerol 3-phosphate + CO2 + H2O. It functions in the pathway amino-acid biosynthesis; L-tryptophan biosynthesis; L-tryptophan from chorismate: step 4/5. The sequence is that of Indole-3-glycerol phosphate synthase from Paracidovorax citrulli (strain AAC00-1) (Acidovorax citrulli).